The sequence spans 824 residues: Lysine-specific histone demethylase 1B homolog (824 aa).

Positions 1-31 (MTTELEIDDRKEEEAQIPGETSESEEGDEPV) are disordered. The SWIRM domain occupies 245–346 (PFTDVIANIV…YGAFDFRIDP (102 aa)). FAD is bound by residues 352-407 (PKIA…AQII), V579, E788, and 796-798 (QTM).

This sequence belongs to the flavin monoamine oxidase family. FAD serves as cofactor. In terms of tissue distribution, in hermaphrodites, expressed in gut cells, embryonic cells and sheath cells. Not expressed in sperm or pharyngeal neurons.

It localises to the nucleus. It carries out the reaction N(6),N(6)-dimethyl-L-lysyl(4)-[histone H3] + 2 A + 2 H2O = L-lysyl(4)-[histone H3] + 2 formaldehyde + 2 AH2. Histone demethylase that demethylates di-methylated 'Lys-4' of histone H3, a specific tag for epigenetic transcriptional activation, thereby acting as a corepressor. Acts by oxidizing the substrate by FAD to generate the corresponding imine that is subsequently hydrolyzed. Plays a role in the mitotic development of the germline. May be involved in H3 demethylation in mitotic cells including gut and embryonic cells. Plays a role in sensitivity upon interstrand cross-link DNA damage, probably by positively regulating the expression of mlh-1. Plays a role in developmental growth and lifespan regulation in response to ultraviolet-induced damage. No obvious role in larval development, sex chromosome segregation or for regulating meiotic crossover frequency. The chain is Lysine-specific histone demethylase 1B homolog from Caenorhabditis elegans.